Consider the following 695-residue polypeptide: Protein ACTIVITY OF BC1 COMPLEX KINASE 7, chloroplastic (695 aa).

The 331-residue stretch at 259–589 (EFEEQPIAAA…VQEIRKQADD (331 aa)) folds into the Protein kinase domain. ATP is bound by residues 265–273 (IAAASLGQV) and Lys-287. Asp-421 (proton acceptor) is an active-site residue. Helical transmembrane passes span 633–653 (TILQ…NIGV) and 659–679 (GSQL…LLVL).

The protein belongs to the protein kinase superfamily. ADCK protein kinase family. In terms of tissue distribution, mostly expressed in leaves and flowers, and, to a lower extent, in roots.

It localises to the plastid. The protein resides in the chloroplast thylakoid membrane. It is found in the chloroplast. Its subcellular location is the plastoglobule. The catalysed reaction is L-seryl-[protein] + ATP = O-phospho-L-seryl-[protein] + ADP + H(+). It catalyses the reaction L-threonyl-[protein] + ATP = O-phospho-L-threonyl-[protein] + ADP + H(+). Functionally, involved in resistance to oxidative stress. Influences responses to reactive oxygen species (ROS) production. Regulates plastoglobules formation in thylakoids. Together with OSA1, regulates iron distribution within the chloroplast and mediates the oxidative stress response. Together with ABC1K8, influences chloroplast lipid synthesis/accumulation and modulates chloroplast membrane composition in response to stress. This Arabidopsis thaliana (Mouse-ear cress) protein is Protein ACTIVITY OF BC1 COMPLEX KINASE 7, chloroplastic.